The following is a 431-amino-acid chain: Keratin, type I cytoskeletal 18 (431 aa).

Positions Ser2–Asn83 are head. A Phosphoserine modification is found at Ser12. At Thr13 the chain carries Phosphothreonine. A phosphoserine mark is found at Ser22 and Ser36. Positions Glu84–Ala119 are coil 1A. The IF rod domain maps to Glu84 to Leu395. The interval Leu120–Ile136 is linker 1. The segment at Val137–Leu228 is coil 1B. Residues Arg229–Ile252 are linker 12. A coil 2 region spans residues Met253–Gly390. Residues Gly391–Leu431 are tail.

Belongs to the intermediate filament family. As to quaternary structure, heterotetramer of two type I and two type II keratins. Keratin-18 associates with keratin-8. In terms of processing, proteolytically cleaved by caspases during epithelial cell apoptosis. As to expression, expressed in simple epithelia such as intestinal mucosa, bile duct, hepatocytes, renal tubules, endothelia, ocular lens epithelium, and in a variety of mesenchymally-derived cells such as blood vessel endothelia, pillar gill cells, optic nerve glial cells, fibroblasts, interstitial cells, chondrocytes and ovarian theca cells. Also expressed in epidermis, pharyngeal mucosa, mucosa of anterior esophagus, gill mucosa and cornea.

Its function is as follows. When phosphorylated, plays a role in filament reorganization. This chain is Keratin, type I cytoskeletal 18, found in Danio rerio (Zebrafish).